A 281-amino-acid polypeptide reads, in one-letter code: Imidazoleglycerol-phosphate dehydratase, chloroplastic (281 aa).

The N-terminal 85 residues, 1–85 (MELYAASHSL…TSLPFHPETR (85 aa)), are a transit peptide targeting the chloroplast. Residues Glu95, 121 to 129 (HMLDQLASH), 147 to 151 (HHTNE), Arg173, and Arg195 contribute to the substrate site. 4 residues coordinate Mn(2+): His121, His147, His148, and Glu151. Residues His219, His243, His244, and Glu247 each coordinate Mn(2+). Residues 243-251 (HHIIEATFK) and 273-275 (SSK) contribute to the substrate site.

It belongs to the imidazoleglycerol-phosphate dehydratase family. It depends on Mn(2+) as a cofactor.

It localises to the plastid. It is found in the chloroplast. The catalysed reaction is D-erythro-1-(imidazol-4-yl)glycerol 3-phosphate = 3-(imidazol-4-yl)-2-oxopropyl phosphate + H2O. The protein operates within amino-acid biosynthesis; L-histidine biosynthesis; L-histidine from 5-phospho-alpha-D-ribose 1-diphosphate: step 6/9. The sequence is that of Imidazoleglycerol-phosphate dehydratase, chloroplastic from Pisum sativum (Garden pea).